Consider the following 165-residue polypeptide: Ubiquitin-fold modifier-conjugating enzyme 1 (165 aa).

The Glycyl thioester intermediate role is filled by C116.

This sequence belongs to the ubiquitin-conjugating enzyme family. UFC1 subfamily.

E2-like enzyme which forms an intermediate with UFM1 via a thioester linkage. In Drosophila mojavensis (Fruit fly), this protein is Ubiquitin-fold modifier-conjugating enzyme 1.